A 229-amino-acid chain; its full sequence is E3 ubiquitin-protein ligase RNF114 (229 aa).

Residues 1–23 (MAAAQPESRDGAAQSAKPASETD) are disordered. The RING-type zinc finger occupies 30–69 (CPVCLEVFEKPVQVPCGHVFCSACLQECLKPKKPVCGVCR). Positions 92 and 95 each coordinate Zn(2+). The C2HC RNF-type zinc finger occupies 92-111 (CHGCRKNFILSKIRAHVTSC). Lys-103 is subject to N6-acetyllysine. Positions 107 and 111 each coordinate Zn(2+). Position 113 is an N6-acetyllysine (Lys-113).

Interacts with XAF1, the interaction increases XAF1 stability and proapoptotic effects, and may regulate IFN signaling. Autoubiquitinated. Polyubiquitinated in the presence of E2 enzymes UBE2D1, UBE2D2 and UBE2D3, but only monoubiquitinated in the presence of UBE2E1.

The protein resides in the cytoplasm. It localises to the nucleus. The enzyme catalyses S-ubiquitinyl-[E2 ubiquitin-conjugating enzyme]-L-cysteine + [acceptor protein]-L-lysine = [E2 ubiquitin-conjugating enzyme]-L-cysteine + N(6)-ubiquitinyl-[acceptor protein]-L-lysine.. It functions in the pathway protein modification; protein ubiquitination. E3 ubiquitin-protein ligase that promotes the ubiquitination of various substrates. In turn, participates in the regulation of many biological processes including cell cycle, apoptosis, osteoclastogenesis as well as innate or adaptive immunity. Acts as negative regulator of NF-kappa-B-dependent transcription by promoting the ubiquitination and stabilization of the NF-kappa-B inhibitor TNFAIP3. May promote the ubiquitination of TRAF6 as well. Also acts as a negative regulator of T-cell activation. Inhibits cellular dsRNA responses and interferon production by targeting MAVS component for proteasomal degradation. Ubiquitinates the CDK inhibitor CDKN1A leading to its degradationand probably also CDKN1B and CDKN1C. This activity stimulates cell cycle G1-to-S phase transition and suppresses cellular senescence. May play a role in spermatogenesis. The polypeptide is E3 ubiquitin-protein ligase RNF114 (Rnf114) (Mus musculus (Mouse)).